A 374-amino-acid chain; its full sequence is Anhydro-N-acetylmuramic acid kinase (374 aa).

Residue 12 to 19 (GTSLDGVD) coordinates ATP.

It belongs to the anhydro-N-acetylmuramic acid kinase family.

It catalyses the reaction 1,6-anhydro-N-acetyl-beta-muramate + ATP + H2O = N-acetyl-D-muramate 6-phosphate + ADP + H(+). It functions in the pathway amino-sugar metabolism; 1,6-anhydro-N-acetylmuramate degradation. The protein operates within cell wall biogenesis; peptidoglycan recycling. In terms of biological role, catalyzes the specific phosphorylation of 1,6-anhydro-N-acetylmuramic acid (anhMurNAc) with the simultaneous cleavage of the 1,6-anhydro ring, generating MurNAc-6-P. Is required for the utilization of anhMurNAc either imported from the medium or derived from its own cell wall murein, and thus plays a role in cell wall recycling. This is Anhydro-N-acetylmuramic acid kinase from Salmonella arizonae (strain ATCC BAA-731 / CDC346-86 / RSK2980).